The sequence spans 294 residues: 4-hydroxy-tetrahydrodipicolinate synthase (294 aa).

Residue T47 participates in pyruvate binding. The Proton donor/acceptor role is filled by Y135. Catalysis depends on K163, which acts as the Schiff-base intermediate with substrate. T205 provides a ligand contact to pyruvate.

It belongs to the DapA family. As to quaternary structure, homotetramer; dimer of dimers.

The protein localises to the cytoplasm. It carries out the reaction L-aspartate 4-semialdehyde + pyruvate = (2S,4S)-4-hydroxy-2,3,4,5-tetrahydrodipicolinate + H2O + H(+). The protein operates within amino-acid biosynthesis; L-lysine biosynthesis via DAP pathway; (S)-tetrahydrodipicolinate from L-aspartate: step 3/4. Catalyzes the condensation of (S)-aspartate-beta-semialdehyde [(S)-ASA] and pyruvate to 4-hydroxy-tetrahydrodipicolinate (HTPA). This Rickettsia akari (strain Hartford) protein is 4-hydroxy-tetrahydrodipicolinate synthase.